The following is a 367-amino-acid chain: tRNA-specific 2-thiouridylase MnmA (367 aa).

ATP contacts are provided by residues 7–14 (AMSGGVDS) and M33. C108 serves as the catalytic Nucleophile. C108 and C200 are oxidised to a cystine. ATP is bound at residue G132. Residues 150-152 (KDQ) form an interaction with tRNA region. C200 acts as the Cysteine persulfide intermediate in catalysis. Residues 301-302 (RY) are interaction with tRNA.

The protein belongs to the MnmA/TRMU family.

The protein localises to the cytoplasm. The enzyme catalyses S-sulfanyl-L-cysteinyl-[protein] + uridine(34) in tRNA + AH2 + ATP = 2-thiouridine(34) in tRNA + L-cysteinyl-[protein] + A + AMP + diphosphate + H(+). Functionally, catalyzes the 2-thiolation of uridine at the wobble position (U34) of tRNA, leading to the formation of s(2)U34. This is tRNA-specific 2-thiouridylase MnmA from Thermus thermophilus (strain ATCC BAA-163 / DSM 7039 / HB27).